A 162-amino-acid polypeptide reads, in one-letter code: Peroxiredoxin-2B (162 aa).

Residues 4–162 (IAVGDVVPDG…SSADDILKAL (159 aa)) enclose the Thioredoxin domain. The active-site Cysteine sulfenic acid (-SOH) intermediate is cysteine 51.

This sequence belongs to the peroxiredoxin family. Prx5 subfamily. Monomer. Expressed in all tissues but mostly in reproductive tissues such as buds, flowers, siliques and seeds.

Its subcellular location is the cytoplasm. It carries out the reaction [glutaredoxin]-dithiol + a hydroperoxide = [glutaredoxin]-disulfide + an alcohol + H2O. In terms of biological role, reduces hydrogen peroxide and alkyl hydroperoxides with reducing equivalents provided through the thioredoxin or glutaredoxin system. May be involved in intracellular redox signaling. Functionally, thiol-specific peroxidase that catalyzes the reduction of hydrogen peroxide and organic hydroperoxides to water and alcohols, respectively. Plays a role in cell protection against oxidative stress by detoxifying peroxides and as sensor of hydrogen peroxide-mediated signaling events. The polypeptide is Peroxiredoxin-2B (PRXIIB) (Arabidopsis thaliana (Mouse-ear cress)).